The primary structure comprises 280 residues: MAEPLAVDPTGLSAAAAKLAGLVFPQPPAPIAVSGTDSVVAAINETMPSIESLVSDGLPGVKAALTRTASNMNAAADVYAKTDQSLGTSLSQYAFGSSGEGLAGVASVGGQPSQATQLLSTPVSQVTTQLGETAAELAPRVVATVPQLVQLAPHAVQMSQNASPIAQTISQTAQQAAQSAQGGSGPMPAQLASAEKPATEQAEPVHEVTNDDQGDQGDVQPAEVVAAARDEGAGASPGQQPGGGVPAQAMDTGAGARPAASPLAAPVDPSTPAPSTTTTL.

Ser-70 carries the post-translational modification Phosphoserine. Low complexity-rich tracts occupy residues 167-181 (QTIS…QSAQ) and 246-280 (PAQA…TTTL). A disordered region spans residues 167 to 280 (QTISQTAQQA…TPAPSTTTTL (114 aa)).

Residues 76-280 interact with EsxB and an artificial EsxB-EsxA heterodimer. Post-translationally, phosphorylated at Ser-70.

The protein resides in the secreted. Could be involved in regulation of growth and intracellular survival. The polypeptide is ESX-1 secretion-associated protein EspJ (Mycobacterium tuberculosis (strain ATCC 25618 / H37Rv)).